A 398-amino-acid polypeptide reads, in one-letter code: Trans-2-enoyl-CoA reductase [NADH] (398 aa).

NAD(+) contacts are provided by residues 47–52, 74–75, 111–112, and 139–140; these read GASSGF, FE, DA, and LA. Residue Y225 coordinates substrate. Catalysis depends on Y235, which acts as the Proton donor. Residues K244 and 274–276 each bind NAD(+); that span reads IVT.

This sequence belongs to the TER reductase family. As to quaternary structure, monomer.

It carries out the reaction a 2,3-saturated acyl-CoA + NAD(+) = a (2E)-enoyl-CoA + NADH + H(+). It participates in lipid metabolism; fatty acid biosynthesis. Functionally, involved in the fatty acid synthesis (FAS II). Catalyzes the reduction of a carbon-carbon double bond in an enoyl moiety that is covalently linked to a coenzyme A (CoA). In Clostridium beijerinckii (strain ATCC 51743 / NCIMB 8052) (Clostridium acetobutylicum), this protein is Trans-2-enoyl-CoA reductase [NADH].